Here is a 141-residue protein sequence, read N- to C-terminus: Nucleoside diphosphate kinase (141 aa).

K11, F59, R87, T93, R104, and N114 together coordinate ATP. H117 serves as the catalytic Pros-phosphohistidine intermediate.

Belongs to the NDK family. As to quaternary structure, homotetramer. Mg(2+) is required as a cofactor.

The protein localises to the cytoplasm. It carries out the reaction a 2'-deoxyribonucleoside 5'-diphosphate + ATP = a 2'-deoxyribonucleoside 5'-triphosphate + ADP. The enzyme catalyses a ribonucleoside 5'-diphosphate + ATP = a ribonucleoside 5'-triphosphate + ADP. In terms of biological role, major role in the synthesis of nucleoside triphosphates other than ATP. The ATP gamma phosphate is transferred to the NDP beta phosphate via a ping-pong mechanism, using a phosphorylated active-site intermediate. This Acidovorax ebreus (strain TPSY) (Diaphorobacter sp. (strain TPSY)) protein is Nucleoside diphosphate kinase.